Consider the following 88-residue polypeptide: MVIDPELGIDIVNLGLVYKVNVDDEGVCTVDMTLTSMGCPMGPQIIDQVKTVLAEIPEIQDTEVNIVWSPPWTKDMMSRYAKIALGVS.

This sequence belongs to the MIP18 family.

In terms of biological role, involved in the maturation of iron-sulfur (Fe-S) proteins. May function as a Fe-S cluster carrier. Is required for S.aureus growth under conditions that impose a high demand for lipoic acid, likely via a role in the maturation of the lipoate synthase LipA. Is non-essential for growth in conditions that impose a low demand for lipoic acid or Fe-S clusters, such as fermentative growth. Also seems to be involved in the maturation of AcnA, LeuCD and IlvD proteins, that utilize Fe-S cluster cofactors, and its role increases under conditions of high-demand for Fe-S clusters (respiratory growth). Is not involved in the repair of Fe-S clusters damaged by reactive oxygen species or in the physical protection of Fe-S clusters from oxidants. Displays synergy with the Fe-S cluster carrier Nfu. The protein is Fe-S protein maturation auxiliary factor SufT of Staphylococcus aureus (strain USA300).